We begin with the raw amino-acid sequence, 431 residues long: Na(+)-translocating NADH-quinone reductase subunit F (431 aa).

Residues 10–30 traverse the membrane as a helical segment; the sequence is IFVASAAFCSLGLILVAVILL. Positions 41–133 constitute a 2Fe-2S ferredoxin-type domain; sequence CKLKINNDDS…DLCLEVEERY (93 aa). [2Fe-2S] cluster-binding residues include cysteine 76, cysteine 82, cysteine 85, and cysteine 117. Positions 136–286 constitute an FAD-binding FR-type domain; it reads ASSWEGTVVS…SGPYGESFMK (151 aa).

It belongs to the NqrF family. As to quaternary structure, composed of six subunits; NqrA, NqrB, NqrC, NqrD, NqrE and NqrF. [2Fe-2S] cluster serves as cofactor. FAD is required as a cofactor.

The protein localises to the cell inner membrane. It carries out the reaction a ubiquinone + n Na(+)(in) + NADH + H(+) = a ubiquinol + n Na(+)(out) + NAD(+). In terms of biological role, NQR complex catalyzes the reduction of ubiquinone-1 to ubiquinol by two successive reactions, coupled with the transport of Na(+) ions from the cytoplasm to the periplasm. The first step is catalyzed by NqrF, which accepts electrons from NADH and reduces ubiquinone-1 to ubisemiquinone by a one-electron transfer pathway. In Chlamydia trachomatis serovar A (strain ATCC VR-571B / DSM 19440 / HAR-13), this protein is Na(+)-translocating NADH-quinone reductase subunit F.